A 329-amino-acid chain; its full sequence is o-succinylbenzoate synthase (329 aa).

K140 functions as the Proton donor in the catalytic mechanism. D168, E197, and D220 together coordinate Mg(2+). K242 (proton acceptor) is an active-site residue.

Belongs to the mandelate racemase/muconate lactonizing enzyme family. MenC type 1 subfamily. Requires a divalent metal cation as cofactor.

The enzyme catalyses (1R,6R)-6-hydroxy-2-succinyl-cyclohexa-2,4-diene-1-carboxylate = 2-succinylbenzoate + H2O. Its pathway is quinol/quinone metabolism; 1,4-dihydroxy-2-naphthoate biosynthesis; 1,4-dihydroxy-2-naphthoate from chorismate: step 4/7. It functions in the pathway quinol/quinone metabolism; menaquinone biosynthesis. Converts 2-succinyl-6-hydroxy-2,4-cyclohexadiene-1-carboxylate (SHCHC) to 2-succinylbenzoate (OSB). The protein is o-succinylbenzoate synthase of Haemophilus influenzae (strain ATCC 51907 / DSM 11121 / KW20 / Rd).